The following is a 70-amino-acid chain: Gas vesicle protein A (70 aa).

Belongs to the gas vesicle GvpA family. As to quaternary structure, the gas vesicle shell is 2 nm thick and consists of a single layer of this protein. It forms helical ribs nearly perpendicular to the long axis of the vesicle.

The protein resides in the gas vesicle shell. Its function is as follows. Gas vesicles are hollow, gas filled proteinaceous nanostructures found in some microorganisms. During planktonic growth they allow positioning of the organism at a favorable depth for light or nutrient acquisition. GvpA forms the protein shell. This is Gas vesicle protein A from Cereibacter sphaeroides (strain ATCC 17023 / DSM 158 / JCM 6121 / CCUG 31486 / LMG 2827 / NBRC 12203 / NCIMB 8253 / ATH 2.4.1.) (Rhodobacter sphaeroides).